A 169-amino-acid polypeptide reads, in one-letter code: Ubiquitin-fold modifier-conjugating enzyme 1 (169 aa).

The Glycyl thioester intermediate role is filled by C116.

The protein belongs to the ubiquitin-conjugating enzyme family. UFC1 subfamily.

Functionally, E2-like enzyme which forms an intermediate with UFM1 via a thioester linkage. This Branchiostoma floridae (Florida lancelet) protein is Ubiquitin-fold modifier-conjugating enzyme 1.